The primary structure comprises 221 residues: Catechol O-methyltransferase (221 aa).

8 residues coordinate S-adenosyl-L-methionine: valine 41, glycine 65, leucine 67, serine 71, glutamate 89, histidine 94, alanine 118, and aspartate 139. Aspartate 139, aspartate 165, and asparagine 166 together coordinate Mg(2+).

Belongs to the class I-like SAM-binding methyltransferase superfamily. Cation-dependent O-methyltransferase family. In terms of assembly, homodimer. It depends on Mg(2+) as a cofactor.

It catalyses the reaction a catechol + S-adenosyl-L-methionine = a guaiacol + S-adenosyl-L-homocysteine + H(+). With respect to regulation, the metal ion affects the meta and para-regiospecificity of the enzyme as well as the enzyme activity and thermal stability. In terms of biological role, catechol O-methyltransferase that can use various catechol-like compounds. Can produce vanillic acid (meta-form) and iso-vanillic acid (para-form) from protocatechuic acid (PCA). Does not have a regiospecificity, and produces the meta- and para-forms of the products in equal proportion. This is Catechol O-methyltransferase from Niastella koreensis (strain DSM 17620 / KACC 11465 / NBRC 106392 / GR20-10).